A 302-amino-acid polypeptide reads, in one-letter code: Dihydroorotate dehydrogenase B (NAD(+)), catalytic subunit (302 aa).

Residues Ser-23 and 47 to 48 contribute to the FMN site; that span reads KG. Substrate is bound by residues Lys-47 and 71-75; that span reads NSVGL. FMN-binding residues include Asn-101 and Asn-128. Position 128 (Asn-128) interacts with substrate. Cys-131 (nucleophile) is an active-site residue. Residues Lys-166 and Ile-192 each coordinate FMN. Residue 193 to 194 participates in substrate binding; sequence NT. FMN-binding positions include Gly-218, 244–245, and 266–267; these read GG and GT.

The protein belongs to the dihydroorotate dehydrogenase family. Type 1 subfamily. As to quaternary structure, heterotetramer of 2 PyrK and 2 PyrD type B subunits. FMN serves as cofactor.

The protein localises to the cytoplasm. The enzyme catalyses (S)-dihydroorotate + NAD(+) = orotate + NADH + H(+). It participates in pyrimidine metabolism; UMP biosynthesis via de novo pathway; orotate from (S)-dihydroorotate (NAD(+) route): step 1/1. Its function is as follows. Catalyzes the conversion of dihydroorotate to orotate with NAD(+) as electron acceptor. The protein is Dihydroorotate dehydrogenase B (NAD(+)), catalytic subunit (pyrD) of Alkaliphilus oremlandii (strain OhILAs) (Clostridium oremlandii (strain OhILAs)).